A 262-amino-acid polypeptide reads, in one-letter code: Ribosomal RNA small subunit methyltransferase A (262 aa).

Positions 16, 18, 43, 64, 89, and 109 each coordinate S-adenosyl-L-methionine.

It belongs to the class I-like SAM-binding methyltransferase superfamily. rRNA adenine N(6)-methyltransferase family. RsmA subfamily.

The protein localises to the cytoplasm. The catalysed reaction is adenosine(1518)/adenosine(1519) in 16S rRNA + 4 S-adenosyl-L-methionine = N(6)-dimethyladenosine(1518)/N(6)-dimethyladenosine(1519) in 16S rRNA + 4 S-adenosyl-L-homocysteine + 4 H(+). Functionally, specifically dimethylates two adjacent adenosines (A1518 and A1519) in the loop of a conserved hairpin near the 3'-end of 16S rRNA in the 30S particle. May play a critical role in biogenesis of 30S subunits. In Xanthomonas euvesicatoria pv. vesicatoria (strain 85-10) (Xanthomonas campestris pv. vesicatoria), this protein is Ribosomal RNA small subunit methyltransferase A.